The sequence spans 125 residues: Small ribosomal subunit protein mS41 (125 aa).

Residues 1-10 (MLSIFGCVRA) constitute a mitochondrion transit peptide. The disordered stretch occupies residues 103–125 (SFFGGERNRKATVAKWRAEQRNK).

The protein belongs to the mitochondrion-specific ribosomal protein mS41 family.

The protein localises to the mitochondrion. Its function is as follows. Involved in telomere length regulation. The polypeptide is Small ribosomal subunit protein mS41 (FYV4) (Candida glabrata (strain ATCC 2001 / BCRC 20586 / JCM 3761 / NBRC 0622 / NRRL Y-65 / CBS 138) (Yeast)).